A 78-amino-acid polypeptide reads, in one-letter code: Acyl carrier protein (78 aa).

One can recognise a Carrier domain in the interval 2-77 (SDTEERVKKI…DAVKFIDKAS (76 aa)). Serine 37 is modified (O-(pantetheine 4'-phosphoryl)serine).

Belongs to the acyl carrier protein (ACP) family. 4'-phosphopantetheine is transferred from CoA to a specific serine of apo-ACP by AcpS. This modification is essential for activity because fatty acids are bound in thioester linkage to the sulfhydryl of the prosthetic group.

The protein resides in the cytoplasm. It functions in the pathway lipid metabolism; fatty acid biosynthesis. Carrier of the growing fatty acid chain in fatty acid biosynthesis. This is Acyl carrier protein from Bartonella bacilliformis (strain ATCC 35685 / KC583 / Herrer 020/F12,63).